A 67-amino-acid polypeptide reads, in one-letter code: ATP synthase F(0) complex subunit 8 (67 aa).

The helical transmembrane segment at 8-24 threads the bilayer; that stretch reads TWSITIMSMIMTLFIVF. Position 54 is an N6-acetyllysine; alternate (Lys54). N6-succinyllysine; alternate is present on Lys54. N6-acetyllysine is present on Lys57.

This sequence belongs to the ATPase protein 8 family. In terms of assembly, component of the ATP synthase complex composed at least of ATP5F1A/subunit alpha, ATP5F1B/subunit beta, ATP5MC1/subunit c (homooctomer), MT-ATP6/subunit a, MT-ATP8/subunit 8, ATP5ME/subunit e, ATP5MF/subunit f, ATP5MG/subunit g, ATP5MK/subunit k, ATP5MJ/subunit j, ATP5F1C/subunit gamma, ATP5F1D/subunit delta, ATP5F1E/subunit epsilon, ATP5PF/subunit F6, ATP5PB/subunit b, ATP5PD/subunit d, ATP5PO/subunit OSCP. ATP synthase complex consists of a soluble F(1) head domain (subunits alpha(3) and beta(3)) - the catalytic core - and a membrane F(0) domain - the membrane proton channel (subunits c, a, 8, e, f, g, k and j). These two domains are linked by a central stalk (subunits gamma, delta, and epsilon) rotating inside the F1 region and a stationary peripheral stalk (subunits F6, b, d, and OSCP). Interacts with PRICKLE3.

The protein localises to the mitochondrion membrane. Functionally, subunit 8, of the mitochondrial membrane ATP synthase complex (F(1)F(0) ATP synthase or Complex V) that produces ATP from ADP in the presence of a proton gradient across the membrane which is generated by electron transport complexes of the respiratory chain. ATP synthase complex consist of a soluble F(1) head domain - the catalytic core - and a membrane F(1) domain - the membrane proton channel. These two domains are linked by a central stalk rotating inside the F(1) region and a stationary peripheral stalk. During catalysis, ATP synthesis in the catalytic domain of F(1) is coupled via a rotary mechanism of the central stalk subunits to proton translocation. In vivo, can only synthesize ATP although its ATP hydrolase activity can be activated artificially in vitro. Part of the complex F(0) domain. The chain is ATP synthase F(0) complex subunit 8 from Felis catus (Cat).